A 248-amino-acid chain; its full sequence is Probable transcriptional regulatory protein Atu3727 (248 aa).

A disordered region spans residues 1–21; it reads MAGHSQFKNIMHRKGKQDSVR.

The protein belongs to the TACO1 family.

It localises to the cytoplasm. This Agrobacterium fabrum (strain C58 / ATCC 33970) (Agrobacterium tumefaciens (strain C58)) protein is Probable transcriptional regulatory protein Atu3727.